The primary structure comprises 222 residues: Protein MKS1 (222 aa).

The interval 1–61 (MDPSEYFAGG…PNRDQPPPYI (61 aa)) is disordered. Residues 12-21 (PSDQQNQKRQ) show a composition bias toward polar residues. A Phosphoserine modification is found at S30. The span at 37 to 46 (DSHKIKKPPK) shows a compositional bias: basic residues. The span at 47–61 (HPAPPPNRDQPPPYI) shows a compositional bias: pro residues. Position 72 is a phosphoserine (S72). The short motif at 83-92 (FMNVVQRLTG) is the VQ element. Positions 105–130 (GDVSPAARLASTENASPRGGKEPAAR) are disordered. Phosphoserine occurs at positions 108 and 120.

Interacts with MPK4, WRKY25 and WRKY33. Phosphorylated on serine residue by MPK4.

The protein localises to the nucleus. In terms of biological role, regulator of plant defense response. May contribute to MPK4-regulated defense activation by coupling the kinase to specific WRKY transcription factors. This chain is Protein MKS1 (MKS1), found in Arabidopsis thaliana (Mouse-ear cress).